Consider the following 2136-residue polypeptide: Protein Ycf2 (2136 aa).

1404–1411 (GPIETGRS) is an ATP binding site.

Belongs to the Ycf2 family.

The protein localises to the plastid. The protein resides in the chloroplast stroma. Functionally, probable ATPase of unknown function. Its presence in a non-photosynthetic plant (Epifagus virginiana) and experiments in tobacco indicate that it has an essential function which is probably not related to photosynthesis. This Marchantia polymorpha (Common liverwort) protein is Protein Ycf2.